Consider the following 231-residue polypeptide: 2-C-methyl-D-erythritol 4-phosphate cytidylyltransferase (231 aa).

This sequence belongs to the IspD/TarI cytidylyltransferase family. IspD subfamily.

The enzyme catalyses 2-C-methyl-D-erythritol 4-phosphate + CTP + H(+) = 4-CDP-2-C-methyl-D-erythritol + diphosphate. Its pathway is isoprenoid biosynthesis; isopentenyl diphosphate biosynthesis via DXP pathway; isopentenyl diphosphate from 1-deoxy-D-xylulose 5-phosphate: step 2/6. In terms of biological role, catalyzes the formation of 4-diphosphocytidyl-2-C-methyl-D-erythritol from CTP and 2-C-methyl-D-erythritol 4-phosphate (MEP). This Lysinibacillus sphaericus (strain C3-41) protein is 2-C-methyl-D-erythritol 4-phosphate cytidylyltransferase.